The chain runs to 102 residues: Large ribosomal subunit protein bL21 (102 aa).

Belongs to the bacterial ribosomal protein bL21 family. In terms of assembly, part of the 50S ribosomal subunit. Contacts protein L20.

This protein binds to 23S rRNA in the presence of protein L20. The chain is Large ribosomal subunit protein bL21 from Geobacter metallireducens (strain ATCC 53774 / DSM 7210 / GS-15).